We begin with the raw amino-acid sequence, 356 residues long: Methylthioribose-1-phosphate isomerase (356 aa).

Catalysis depends on D234, which acts as the Proton donor.

Belongs to the eIF-2B alpha/beta/delta subunits family. MtnA subfamily.

The protein resides in the cytoplasm. Its subcellular location is the nucleus. The enzyme catalyses 5-(methylsulfanyl)-alpha-D-ribose 1-phosphate = 5-(methylsulfanyl)-D-ribulose 1-phosphate. It functions in the pathway amino-acid biosynthesis; L-methionine biosynthesis via salvage pathway; L-methionine from S-methyl-5-thio-alpha-D-ribose 1-phosphate: step 1/6. In terms of biological role, catalyzes the interconversion of methylthioribose-1-phosphate (MTR-1-P) into methylthioribulose-1-phosphate (MTRu-1-P). This chain is Methylthioribose-1-phosphate isomerase (mri1), found in Schizosaccharomyces japonicus (strain yFS275 / FY16936) (Fission yeast).